A 321-amino-acid polypeptide reads, in one-letter code: uncharacterized protein (321 aa).

This sequence belongs to the NAD(P)-dependent epimerase/dehydratase family.

This is an uncharacterized protein from Staphylococcus aureus (strain COL).